We begin with the raw amino-acid sequence, 115 residues long: MSNIIKQLEQEQMKQNVPSFRPGDTVEVKVWVVEGTKKRLQAFEGVVIAIRNRGLHSAFTVRKISNGEGVERVFQTHSPVVDSIAVKRRGAVRKAKLYYLRERTGKAARIKERLN.

It belongs to the bacterial ribosomal protein bL19 family.

Its function is as follows. This protein is located at the 30S-50S ribosomal subunit interface and may play a role in the structure and function of the aminoacyl-tRNA binding site. The sequence is that of Large ribosomal subunit protein bL19 from Salmonella choleraesuis (strain SC-B67).